The sequence spans 196 residues: uncharacterized protein (196 aa).

Over residues 1–10 the composition is skewed to pro residues; it reads MPGMVPPHVP. Disordered regions lie at residues 1 to 118 and 176 to 196; these read MPGM…EGSG and TEQA…SAPG. The segment covering 25 to 45 has biased composition (low complexity); sequence PVAPQVPSPGGAPGQGPYPYS. Positions 54-69 are enriched in polar residues; the sequence is LDTSGKNLTEQNSYSN.

This is an uncharacterized protein from Homo sapiens (Human).